Reading from the N-terminus, the 605-residue chain is Acetoin dehydrogenase operon transcriptional activator AcoR (605 aa).

The Sigma-54 factor interaction domain maps to 295–520; sequence VIGQSGRSQA…LFNVFERLSI (226 aa). ATP-binding positions include 323–330 and 387–396; these read GETGTGKE and ANQGTLFLDE. The H-T-H motif DNA-binding region spans 578-597; that stretch reads VSQAAKISGIPRSTFYKRLK.

Its function is as follows. Acts as a transcriptional activator of the acoABCL operon encoding the acetoin dehydrogenase complex. The chain is Acetoin dehydrogenase operon transcriptional activator AcoR (acoR) from Bacillus subtilis (strain 168).